The chain runs to 181 residues: Large ribosomal subunit protein eL18 (181 aa).

Residues 152 to 181 (WGKAPGQRGSHSAPYVRSEGRKFERAHGLK) form a disordered region. Basic and acidic residues predominate over residues 169-181 (SEGRKFERAHGLK).

The protein belongs to the eukaryotic ribosomal protein eL18 family.

It localises to the cytoplasm. The sequence is that of Large ribosomal subunit protein eL18 (RPL18) from Tetrahymena thermophila.